Here is a 66-residue protein sequence, read N- to C-terminus: Large ribosomal subunit protein bL35c (66 aa).

It belongs to the bacterial ribosomal protein bL35 family.

It localises to the plastid. The protein localises to the chloroplast. The sequence is that of Large ribosomal subunit protein bL35c from Guillardia theta (Cryptophyte).